A 306-amino-acid polypeptide reads, in one-letter code: Porphobilinogen deaminase (306 aa).

Position 240 is an S-(dipyrrolylmethanemethyl)cysteine (C240).

This sequence belongs to the HMBS family. Monomer. It depends on dipyrromethane as a cofactor.

The enzyme catalyses 4 porphobilinogen + H2O = hydroxymethylbilane + 4 NH4(+). Its pathway is porphyrin-containing compound metabolism; protoporphyrin-IX biosynthesis; coproporphyrinogen-III from 5-aminolevulinate: step 2/4. In terms of biological role, tetrapolymerization of the monopyrrole PBG into the hydroxymethylbilane pre-uroporphyrinogen in several discrete steps. The protein is Porphobilinogen deaminase of Syntrophomonas wolfei subsp. wolfei (strain DSM 2245B / Goettingen).